Consider the following 1593-residue polypeptide: THO complex subunit 2 (1593 aa).

The anchor domain; interaction with THOC5 and THOC7 stretch occupies residues 1–163 (MAAAAVVVPA…KLFYKQQKFN (163 aa)). Positions 164–534 (LLREENEGYA…GQWKNETYNS (371 aa)) are bow domain; interaction with THOC1 dock domain and THOC3. Residues 322 to 341 (KMDEREKEKEKEEEKVEKPP) form a disordered region. Residues 535-686 (HPLLVKVKAQ…LILKEVVQKM (152 aa)) form an MIF4G domain; interaction with THOC3 and DDX39B region. The stern domain stretch occupies residues 687–1174 (AGIEITEEMT…LAMGYSGQLK (488 aa)). A coiled-coil region spans residues 896–965 (HTSYEREVNK…LKLEKDNWLL (70 aa)). The short motif at 923 to 928 (KKKKEK) is the Nuclear localization signal element. Positions 1175 to 1593 (SRKSYMIPEN…KHHKSSDKHR (419 aa)) are charged domain. A disordered region spans residues 1184–1593 (NEFHHKDPPP…KHHKSSDKHR (410 aa)). The span at 1218–1234 (KSDESSTEETDKSRERS) shows a compositional bias: basic and acidic residues. Serine 1222 carries the phosphoserine modification. Residues 1251–1263 (GNSSNGNSGSNSN) show a composition bias toward low complexity. Basic and acidic residues-rich tracts occupy residues 1265 to 1285 (AVKENDKEKGKEKEKEKKEKT), 1294 to 1343 (VLGK…EKFK), and 1353 to 1383 (STQEREREKEPSRERDIAKEMKSKENVKGGE). Threonine 1385 is modified (phosphothreonine). Phosphoserine occurs at positions 1390, 1393, and 1417. Polar residues predominate over residues 1416-1425 (PSPSHSSTVK). Threonine 1443 bears the Phosphothreonine mark. Positions 1449 to 1504 (KSKEREMDKKDLDKSRERSREREKKDEKDRKERKRDHSNNDREVPPDLTKRRKEEN) are enriched in basic and acidic residues. Phosphoserine is present on residues serine 1450, serine 1486, and serine 1516. Over residues 1524 to 1582 (NEKDKEKNKSKSSGKEKGSDSFKSEKMDKISSGGKKESRHDKEKIEKKEKRDSSGGKEE) the composition is skewed to basic and acidic residues. Over residues 1583–1593 (KKHHKSSDKHR) the composition is skewed to basic residues.

It belongs to the THOC2 family. In terms of assembly, component of the THO subcomplex, which is composed of THOC1, THOC2, THOC3, THOC5, THOC6 and THOC7. The THO subcomplex interacts with DDX39B to form the THO-DDX39B complex which multimerizes into a 28-subunit tetrameric assembly. Component of the transcription/export (TREX) complex at least composed of ALYREF/THOC4, DDX39B, SARNP/CIP29, CHTOP and the THO subcomplex; in the complex interacts with THOC1, THOC3, THOC5, THOC7 and DDX39B. TREX seems to have a dynamic structure involving ATP-dependent remodeling. Interacts with POLDIP3 and ZC3H11A. As to expression, expressed in the hippocampus and the cerebral cortex.

Its subcellular location is the nucleus. It localises to the nucleus speckle. It is found in the cytoplasm. Its function is as follows. Component of the THO subcomplex of the TREX complex which is thought to couple mRNA transcription, processing and nuclear export, and which specifically associates with spliced mRNA and not with unspliced pre-mRNA. Required for efficient export of polyadenylated RNA and spliced mRNA. The THOC1-THOC2-THOC3 core complex alone is sufficient to bind export factor NXF1-NXT1 and promote ATPase activity of DDX39B; in the complex THOC2 is the only component that directly interacts with DDX39B. TREX is recruited to spliced mRNAs by a transcription-independent mechanism, binds to mRNA upstream of the exon-junction complex (EJC) and is recruited in a splicing- and cap-dependent manner to a region near the 5' end of the mRNA where it functions in mRNA export to the cytoplasm via the TAP/NXF1 pathway. Required for NXF1 localization to the nuclear rim. THOC2 (and probably the THO complex) is involved in releasing mRNA from nuclear speckle domains. (Microbial infection) The TREX complex is essential for the export of Kaposi's sarcoma-associated herpesvirus (KSHV) intronless mRNAs and infectious virus production. The sequence is that of THO complex subunit 2 (THOC2) from Homo sapiens (Human).